Reading from the N-terminus, the 346-residue chain is tRNA N6-adenosine threonylcarbamoyltransferase (346 aa).

2 residues coordinate Fe cation: H110 and H114. Residues 132 to 136, D165, G178, and N274 contribute to the substrate site; that span reads LLSGG. A Fe cation-binding site is contributed by D298.

Belongs to the KAE1 / TsaD family. Fe(2+) is required as a cofactor.

The protein localises to the cytoplasm. It carries out the reaction L-threonylcarbamoyladenylate + adenosine(37) in tRNA = N(6)-L-threonylcarbamoyladenosine(37) in tRNA + AMP + H(+). Its function is as follows. Required for the formation of a threonylcarbamoyl group on adenosine at position 37 (t(6)A37) in tRNAs that read codons beginning with adenine. Is involved in the transfer of the threonylcarbamoyl moiety of threonylcarbamoyl-AMP (TC-AMP) to the N6 group of A37, together with TsaE and TsaB. TsaD likely plays a direct catalytic role in this reaction. The chain is tRNA N6-adenosine threonylcarbamoyltransferase from Borreliella burgdorferi (strain ATCC 35210 / DSM 4680 / CIP 102532 / B31) (Borrelia burgdorferi).